Here is a 555-residue protein sequence, read N- to C-terminus: Putative outer capsid protein p10 (555 aa).

Its subcellular location is the virion. In Saccharum officinarum (Sugarcane), this protein is Putative outer capsid protein p10 (S10).